The chain runs to 832 residues: Protein P (832 aa).

The tract at residues 1–177 (MPLSCPHFRK…FCGSPYSWEQ (177 aa)) is terminal protein domain (TP). The segment at 178 to 335 (ELQHGAEPVC…YCLSHLVNLL (158 aa)) is spacer. Residues 208-224 (KQSRLGLQSQQRQLARS) show a composition bias toward low complexity. The disordered stretch occupies residues 208-241 (KQSRLGLQSQQRQLARSHQGRSGSIRARVHSTTR). The segment at 336–679 (EDWGPCTEHG…YLTLYPVARQ (344 aa)) is polymerase/reverse transcriptase domain (RT). Residues 346-589 (EHHIRIPRTP…YSLNFMGYII (244 aa)) enclose the Reverse transcriptase domain. Mg(2+) is bound by residues D418, D540, and D541.

It belongs to the hepadnaviridae P protein family.

It carries out the reaction DNA(n) + a 2'-deoxyribonucleoside 5'-triphosphate = DNA(n+1) + diphosphate. The catalysed reaction is Endonucleolytic cleavage to 5'-phosphomonoester.. Its activity is regulated as follows. Activated by host HSP70 and HSP40 in vitro to be able to bind the epsilon loop of the pgRNA. Because deletion of the RNase H region renders the protein partly chaperone-independent, the chaperones may be needed indirectly to relieve occlusion of the RNA-binding site by this domain. Inhibited by several reverse-transcriptase inhibitors: Lamivudine, Adefovir and Entecavir. Functionally, multifunctional enzyme that converts the viral RNA genome into dsDNA in viral cytoplasmic capsids. This enzyme displays a DNA polymerase activity that can copy either DNA or RNA templates, and a ribonuclease H (RNase H) activity that cleaves the RNA strand of RNA-DNA heteroduplexes in a partially processive 3'- to 5'-endonucleasic mode. Neo-synthesized pregenomic RNA (pgRNA) are encapsidated together with the P protein, and reverse-transcribed inside the nucleocapsid. Initiation of reverse-transcription occurs first by binding the epsilon loop on the pgRNA genome, and is initiated by protein priming, thereby the 5'-end of (-)DNA is covalently linked to P protein. Partial (+)DNA is synthesized from the (-)DNA template and generates the relaxed circular DNA (RC-DNA) genome. After budding and infection, the RC-DNA migrates in the nucleus, and is converted into a plasmid-like covalently closed circular DNA (cccDNA). The activity of P protein does not seem to be necessary for cccDNA generation, and is presumably released from (+)DNA by host nuclear DNA repair machinery. This is Protein P from Gibbon hepatitis B virus subtype ayw3q (isolate Hope) (HBVgbn).